The sequence spans 788 residues: Structure-specific endonuclease subunit SLX4 (788 aa).

Disordered stretches follow at residues 59–86, 562–584, and 599–622; these read LQNENLENKNKDTSITKPKRRSKRDNNR, KRQPVDSENEIRDSEDEGEHDNS, and DLVNLGRNPRNENDTSVLQVPSSP. A compositionally biased stretch (basic and acidic residues) spans 562–573; it reads KRQPVDSENEIR. A compositionally biased stretch (polar residues) spans 612–622; it reads DTSVLQVPSSP.

The protein belongs to the SLX4 family. In terms of assembly, forms a heterodimer with SLX1. Post-translationally, phosphorylated in response to DNA damage.

It is found in the nucleus. Regulatory subunit of the SLX1-SLX4 structure-specific endonuclease that resolves DNA secondary structures generated during DNA repair and recombination. Has endonuclease activity towards branched DNA substrates, introducing single-strand cuts in duplex DNA close to junctions with ss-DNA. The polypeptide is Structure-specific endonuclease subunit SLX4 (Debaryomyces hansenii (strain ATCC 36239 / CBS 767 / BCRC 21394 / JCM 1990 / NBRC 0083 / IGC 2968) (Yeast)).